Consider the following 346-residue polypeptide: Biotin synthase (346 aa).

Residues 38-256 (RQVQVSTLLS…IAVARIMMPT (219 aa)) form the Radical SAM core domain. Positions 53, 57, and 60 each coordinate [4Fe-4S] cluster. [2Fe-2S] cluster-binding residues include C97, C128, C188, and R260.

Belongs to the radical SAM superfamily. Biotin synthase family. In terms of assembly, homodimer. It depends on [4Fe-4S] cluster as a cofactor. [2Fe-2S] cluster is required as a cofactor.

It catalyses the reaction (4R,5S)-dethiobiotin + (sulfur carrier)-SH + 2 reduced [2Fe-2S]-[ferredoxin] + 2 S-adenosyl-L-methionine = (sulfur carrier)-H + biotin + 2 5'-deoxyadenosine + 2 L-methionine + 2 oxidized [2Fe-2S]-[ferredoxin]. The protein operates within cofactor biosynthesis; biotin biosynthesis; biotin from 7,8-diaminononanoate: step 2/2. Catalyzes the conversion of dethiobiotin (DTB) to biotin by the insertion of a sulfur atom into dethiobiotin via a radical-based mechanism. The chain is Biotin synthase from Shigella dysenteriae serotype 1 (strain Sd197).